Consider the following 750-residue polypeptide: Polyribonucleotide nucleotidyltransferase (750 aa).

Residues aspartate 519 and aspartate 525 each contribute to the Mg(2+) site. The 60-residue stretch at 585–644 folds into the KH domain; it reads PRVIAVKIPVDKIGEVIGPKGKMINQIQEDTGADISIEDDGTVYIGATNGPSADAARSAI. Residues 656-728 enclose the S1 motif domain; that stretch reads GERYLGTVVK…DRGKLSLSPV (73 aa). The segment at 725–750 is disordered; it reads LSPVVAEEEGAASEDAPAEAAEESAE. A compositionally biased stretch (acidic residues) spans 730-750; the sequence is AEEEGAASEDAPAEAAEESAE.

Belongs to the polyribonucleotide nucleotidyltransferase family. It depends on Mg(2+) as a cofactor.

It is found in the cytoplasm. It carries out the reaction RNA(n+1) + phosphate = RNA(n) + a ribonucleoside 5'-diphosphate. Involved in mRNA degradation. Catalyzes the phosphorolysis of single-stranded polyribonucleotides processively in the 3'- to 5'-direction. In Paenarthrobacter aurescens (strain TC1), this protein is Polyribonucleotide nucleotidyltransferase.